We begin with the raw amino-acid sequence, 439 residues long: Serine--tRNA ligase (439 aa).

247 to 249 (TSE) contacts L-serine. 278-280 (RSE) contacts ATP. L-serine is bound at residue E301. Residue 365–368 (EISS) coordinates ATP. Residue S400 participates in L-serine binding.

The protein belongs to the class-II aminoacyl-tRNA synthetase family. Type-1 seryl-tRNA synthetase subfamily. Homodimer. The tRNA molecule binds across the dimer.

It is found in the cytoplasm. The catalysed reaction is tRNA(Ser) + L-serine + ATP = L-seryl-tRNA(Ser) + AMP + diphosphate + H(+). The enzyme catalyses tRNA(Sec) + L-serine + ATP = L-seryl-tRNA(Sec) + AMP + diphosphate + H(+). The protein operates within aminoacyl-tRNA biosynthesis; selenocysteinyl-tRNA(Sec) biosynthesis; L-seryl-tRNA(Sec) from L-serine and tRNA(Sec): step 1/1. Catalyzes the attachment of serine to tRNA(Ser). Is also able to aminoacylate tRNA(Sec) with serine, to form the misacylated tRNA L-seryl-tRNA(Sec), which will be further converted into selenocysteinyl-tRNA(Sec). The sequence is that of Serine--tRNA ligase from Paracidovorax citrulli (strain AAC00-1) (Acidovorax citrulli).